A 383-amino-acid chain; its full sequence is Cell division protein FtsZ (383 aa).

Residues 20–24, 107–109, glutamate 138, arginine 142, and asparagine 186 contribute to the GTP site; these read GGGGN and GTG.

The protein belongs to the FtsZ family. Homodimer. Polymerizes to form a dynamic ring structure in a strictly GTP-dependent manner. Interacts directly with several other division proteins.

The protein localises to the cytoplasm. Essential cell division protein that forms a contractile ring structure (Z ring) at the future cell division site. The regulation of the ring assembly controls the timing and the location of cell division. One of the functions of the FtsZ ring is to recruit other cell division proteins to the septum to produce a new cell wall between the dividing cells. Binds GTP and shows GTPase activity. This Shigella flexneri protein is Cell division protein FtsZ.